Reading from the N-terminus, the 132-residue chain is Chemokine-like protein TAFA-5 (132 aa).

A signal peptide spans 1-43 (MAPSPRTGSRQDATALPSMSSTFWAFMILASLLIAYCSQLAAG). The N-linked (GlcNAc...) asparagine glycan is linked to Asn-113.

The protein belongs to the TAFA family.

It is found in the secreted. In terms of biological role, acts as a chemokine-like protein by regulating cell proliferation and migration through activation of G protein-coupled receptors (GPCRs), such as S1PR2 and FPR2. Stimulates chemotactic migration of macrophages mediated by the MAPK3/ERK1 and AKT1 pathway. Blocks TNFSF11/RANKL-induced osteoclast formation from macrophages by inhibiting up-regulation of osteoclast fusogenic and differentiation genes. Stimulation of macrophage migration and inhibition of osteoclast formation is mediated through the GPCR FPR2. Acts as an adipokine by negatively regulating vascular smooth muscle cell (VSMC) proliferation and migration in response to platelet-derived growth factor stimulation via GPCR S1PR2 and G protein GNA12/GNA13-transmitted RHOA signaling. Inhibits injury-induced cell proliferation and neointima formation in the femoral arteries. The chain is Chemokine-like protein TAFA-5 (TAFA5) from Bos taurus (Bovine).